Consider the following 4115-residue polypeptide: MDPSIPSTSHRSVPPDRGVQPDRNLHVQELENRIQSLVHGGQRDDVKLKELQDIWASLENHFTASSHEKVVEKLVLSILQLFCNTSPQFISENNTQMLRKLMLEILLRLSNTDPVKTHSKEILKQMMRLIGVENEENAILAIRILIDQGRYGKLDYCREVQSLLLLMRTMVKELAESGRTAEMFLVRELTVPPATSSEEQLIAEYLTKCYYAQPVILNAKDGLQGPKFNMIPSAHQSIKVLLEMPFLVIFFYQNFKTTVQTEALEFTRLCLDFLNVPVPADKTKYHDVLTDDFVTVQSKILSFVNIMAKIPAFMELLQQNGDSLVSGTMQMLERCPPDLISVRREVLLAVKYFTAGEMKSRFFTMLPRLISEHFILGTGFTAIELLRVFMYQMLADLMHHTRDTISYELISHVVFVFCRALHDPNNSAQVLIMSARLLNSLAESLCRMESQAPIRDLMLEILEAQVSKLKVMAVYHIPILFQQYGTEIEYEYRNYERESEKPKVNVMKESTQREVPKRRTRKLSMDSVEELEFLVTDNVNMTESEQKRNELPTPTKEHTKKTSPEAILNSLYAASTQPLGLSETRNLIKYVMHTCKYVTGQLKISRPSTEMYHCVRERDLYERLLRYGIMCMDIYVLPAVKNQAQAHASQRTKEEKEALESLANVFTSIDHAIFRELFEKYMDFLIERIYNRNYPLQLMVNTFLVRNEVPFFASTMLSFLMSRMKMLEVSSDKTALYVKLFKIIFSAIGANNSTIYQDRMLTNYLPEILKQSTVLALTAREPTNYFLLLRSLFRSIGGGAQDMLYGTFLQLLPNLLQFLNKLTSCQHRIQMREIFVELCLTVPVRLSSLLPYLPLLMDPLVCAMNGSPNLVTQGLRTLELCVDNLQPEYLLENMLPVRGALMQGLYRVISKAPDTASMKVAFRILGKFGGANRKLLNQPQLLQVRRFPDSYLNMEFSQMGLDGNHSLHLPISELMRVAADQMRYPADQIFNPNPTNIPSPHVKKCCMELSKAVLLAGLGSSGSHTVPTKDLPKVLKKLLTGFNVNQRTTEIYICPKENDREVYVNALLVVAYGIWNKDGLRQLYSRFFVKIIRQFALMGAIEFVSGNGWMQNADEEGALPLCLDSSVLVDALITCLSETSTSFFYGGIMCLRYINETLELALPDINQMSKVPLCKYLMEKVLKLCHGPAQYARAGGINAFMYMIEHYPRKFIMDFVIDVVDAIMEVLLGLVEEISSGSADIATDCFKKMMRTYFIQEENQEEENLTLASIFVAVFGKHYFHGNDRIRDYMAQLMEYCMIQSRLETNLDKFYYRFREFFEPELIRIMETLPTMSLTDAQGSLDGLQRFVFICPEGFEFEKDSEIYKRYLVHLLDLAQTDTQTINQRNAFKKCETCPSHFLPPFPILHHIDQMRGSALQCLVIAYDRLRKQLENTTRDIEDEQLMSEILAMNSPRITVEQIFENNESWRRLMTVLLRAITDKDIPDIADKLYPALMRVTPVPTNIIATFGANYIRNISRANDENDPDRTITYHDCRKFSILVELNPKILVRNIVKNLANHIIKYNMSDSISNILVMPNEAKEEEVEAYEAEKKRGVRDLEMIGYTAKMLAGCSMEILTAEIIIDITRFAAKFEYTYSQDVLPNWIDDVVKLMNKAPVEVWKFFLLRESVANPARRSLIRRAIIFPTSEPLRKVFMQTPEYLERLIDSNLDNYDNSDERVIIDREMFLLSLVDRISRNCHDWLSDPSLSPIPQLRAFFNGTEFMDRYSVRSIMVEEAREIRVISMTEDKYKVPKLMTNIFLRYLRFVRKYFPVKLIFYRNNIQDYDMFFNVVSVFMGKFQTDFTFVREYLEVEVIPKMPLWWRREIFIKVMVMFEENAQKACKDFRILKALQYLILPSLQWAFERYDTDEIVGSAPIDDSENAADAESSNNTENLVGRLTSVIGAHRLDFSDGMIILFYQLCTLFVQHAPEHIHNNHCKKQGGRLRNFMLFAWPCLATPNRQDPTLRYTGFFFLANIIERFTINRKIVLQVFQQLMTNYQQDTRDQVRRAIDILTPALKVRMEDGHQQILTQVKKLLIEEGHILQHIQHILGTIIRNWRVYYHIRHEILTPLLNAVQRALTMPNSVIEHAQTRKQAIEVCEMIIKWELLKLHKTDHIITDDEANEVDKLYEKLRGASSPDRYDFEDQQMKKDLLDSQRVITREHVDIVVNMLMRFCVMFHTSAQNNSTSGQQGAELVKKCQLLLRICLRSSVWGDFVNIRTSILNNYIVVPSELIPKQNEVQNPEYVLAANNSQYTIEMLNVIVPILPKPTLKNVLNILQPALIGVIQSSGHMSRGITQLISRLGERTSVSTNGLDEFELLNSYIVKYIHDSFSTILRCVLIWISIYSLNPFFRNQNAPVLSVLGSFTLLRAMCGHEAGFLDNFMPTFLKVMDRVAREHLQFNSRQQPSVQKNLSELTCVCMELVRQRIDHIGLELKRTTITDVMTELIFKSTSERVIQVCAKLIGAMLSPTDMEFSLHTCLQQLVRIQSVIISKFKNCKEVITEFLVVVIKVFENAEYRNSEYGARLWEAFFWGLKSTDPTTRDSFSAVWEMTWPQMSTADICHRMKYIMKHQDWSKFKHAFWLKFALWGMLRAISKRPKSVNNPKKKVVMLNCATPWRTIEYAARLKEQHMETDPMIKLEEPEPMEVDQPKNAPAEEPKDNKLSLDDFLAGQQELLEEAAEFDFADALDTVSQITFGINDNGMTSRIWVTFFKSFWASLQPREVEDFTALIVPFLSSGVHNQFQTGVQDSVLAVWLEAIGEKVPLPSSLIEFISSKHECWYTGISILESSIWSIPKQLNNTLLGNINCDRSLTSNIETLESLGALYKELAEFDQYSAIWERRSVFPETMKAMSALQLGDMDTAASILEQAMNKEMEHLPVPTANAAPPGPNDRQISPIYDREYEQWMQMYMSSCSELLQWQTVAEISNSREVQDVRGIITAASHIPDWNLVEDCRSMLSGCIPPDFHLEYTVFNLMSTVMRLNESVNVPHARERCKQALQECIEAHISRFRALPSVTSYGHVKILQSMNLVRDIEESMEVRIALLEQPTKMDQSLMMDMKSLMKVYRNRTPTTADDMGFVATWYDWRNQIHGMMLQRFEWFDKSSLSTTGNGNQSIVPIHSMAQAQLTVAKHAKSLGFNNLAKDLLNKLGGLPAIPMMDAVDKVCTYGKTLRALSNNVDDERSKQELLYEALEVLEDVRIDDLQKDQITSLLFNRATIHSALGQTANADRAFSAAVQLTDMKTANVPTGIKLFRQWGNHLNKLFFDQSQMVSKETSENFGRQALSCYFVAARVDGDLKARKPIAKILWIAKHLMASGASEALNRVIQKHLPSLNLFNWLYWIPQLVTEISHQPNNNFIMVLCRVSLKSESFNSNGASKVSKSGISGPRKQSKVTPRFPRFLIEQNLNQCDDIAAAHPLQVFYHIREAVSVEDIDAVFAQDYTEEEMSMDTPDDEAFSNDPPFSRALKICLKYRPTDIRVLHRILKELDQMTETWVERHLRFAVAIKDQLFEDFAEQMDARFNEMQFSGAVYELTQKWKRQLEEDYKFFENNYNLDLLEIRNRRRVIVTKGYMGTVPSQIMFEKELSQVFTDPPEMKDEFEYVTEITKVIFDQLDIRSPQAPRPALFVRTVMEWIRIIRRRFDRLPRRVPMEISSPYLARFSHRTGCIEMPYDLLNVLRAKNHSLNATNQTGQYISMMSRFEPYFEIVMRGGQVTRKIYLRGQTGKSAAFYLKKSIKDERTNRVPQMFKHVDYLLQNDRETARRHLSVPSLLQMRVSKNTTFCEIASVQPYAIPQDCSRNYPASQIEVMHPYEVLTSTFNGLYSPDDMVMHFYERFADSCSSIGQPLPQNIDPSMASQPRLTEPHHVKNIIYEDFARDMIPFRLLTDYLLARYPDPVMFYAMRKQFIHSFAVLSIIEYHCNLSPMTPHQMIISMNTGVLNNPFYRFELGTGQLMDIEHFAHEVPFRLTPNLMMFVGVAQDGDLLWSMAAVARCLMKKEPGAVMRPLLWDEYANNVNYENMIYICHAANSYVKCIENKVAMTNRHDAKVKKDDCNSLIIRAKDSDNLSRMPPTYHAWF.

A compositionally biased stretch (polar residues) spans 1-11; it reads MDPSIPSTSHR. Disordered stretches follow at residues 1-21 and 543-563; these read MDPSIPSTSHRSVPPDRGVQP and ESEQKRNELPTPTKEHTKKTS. The segment covering 544-563 has biased composition (basic and acidic residues); sequence SEQKRNELPTPTKEHTKKTS. 2 TPR repeats span residues 1341 to 1374 and 1820 to 1853; these read LDGLQRFVFICPEGFEFEKDSEIYKRYLVHLLDL and QDYDMFFNVVSVFMGKFQTDFTFVREYLEVEVIP. The segment at 2678 to 2701 is disordered; the sequence is LEEPEPMEVDQPKNAPAEEPKDNK. One can recognise an FAT domain in the interval 2808–3421; it reads LIEFISSKHE…SNGASKVSKS (614 aa). One copy of the TPR 3 repeat lies at 2855–2888; that stretch reads IETLESLGALYKELAEFDQYSAIWERRSVFPETM. The 361-residue stretch at 3740–4100 folds into the PI3K/PI4K catalytic domain; sequence EPYFEIVMRG…CNSLIIRAKD (361 aa). A G-loop region spans residues 3746 to 3752; it reads VMRGGQV. The segment at 3959-3967 is catalytic loop; it reads NLSPMTPHQ. The tract at residues 3979–4006 is activation loop; it reads NPFYRFELGTGQLMDIEHFAHEVPFRLT. Residues 4083-4115 enclose the FATC domain; the sequence is DAKVKKDDCNSLIIRAKDSDNLSRMPPTYHAWF.

It belongs to the PI3/PI4-kinase family. TRA1 subfamily.

The protein resides in the nucleus. In terms of biological role, influences germ cell fate in hermaphrodites. Acts downstream of tra-2 and tra-3 and through the Tip60 histone acetyltransferase complex to regulate germ cell fate decisions. Required for spermatogenesis and embryonic development. Acts with tra-2 to promote expression of fog-3 and control male tail development. Involved in the negative regulation of vulval development. In Caenorhabditis briggsae, this protein is Transcription-associated protein 1.